A 194-amino-acid chain; its full sequence is Large ribosomal subunit protein eL15 (194 aa).

Residues 160–194 are disordered; that stretch reads RGLTSAGKKGRGLMYKGKGTEKVRPSVRANSKKAK.

This sequence belongs to the eukaryotic ribosomal protein eL15 family.

This Methanococcus maripaludis (strain C7 / ATCC BAA-1331) protein is Large ribosomal subunit protein eL15.